A 437-amino-acid polypeptide reads, in one-letter code: Trigger factor (437 aa).

The PPIase FKBP-type domain occupies 161 to 246 (GDQVNINFVG…VNSVSEAVLP (86 aa)).

It belongs to the FKBP-type PPIase family. Tig subfamily.

It is found in the cytoplasm. The catalysed reaction is [protein]-peptidylproline (omega=180) = [protein]-peptidylproline (omega=0). Functionally, involved in protein export. Acts as a chaperone by maintaining the newly synthesized protein in an open conformation. Functions as a peptidyl-prolyl cis-trans isomerase. The chain is Trigger factor from Cellvibrio japonicus (strain Ueda107) (Pseudomonas fluorescens subsp. cellulosa).